We begin with the raw amino-acid sequence, 343 residues long: Heat-inducible transcription repressor HrcA (343 aa).

This sequence belongs to the HrcA family.

In terms of biological role, negative regulator of class I heat shock genes (grpE-dnaK-dnaJ and groELS operons). Prevents heat-shock induction of these operons. The polypeptide is Heat-inducible transcription repressor HrcA (Mycoplasma genitalium (strain ATCC 33530 / DSM 19775 / NCTC 10195 / G37) (Mycoplasmoides genitalium)).